The sequence spans 332 residues: Putative D-threonate 4-phosphate dehydrogenase (332 aa).

Histidine 138 and threonine 139 together coordinate substrate. 3 residues coordinate a divalent metal cation: histidine 168, histidine 211, and histidine 266. Residues lysine 274 and arginine 292 each contribute to the substrate site.

Belongs to the PdxA family. PdxA2 subfamily. Homodimer. A divalent metal cation is required as a cofactor.

The enzyme catalyses 4-O-phospho-D-threonate + NAD(+) = dihydroxyacetone phosphate + CO2 + NADH. Its function is as follows. Catalyzes the NAD-dependent oxidation and subsequent decarboxylation of D-threonate 4-phosphate to produce dihydroxyacetone phosphate (DHAP). The sequence is that of Putative D-threonate 4-phosphate dehydrogenase from Fusobacterium nucleatum subsp. nucleatum (strain ATCC 25586 / DSM 15643 / BCRC 10681 / CIP 101130 / JCM 8532 / KCTC 2640 / LMG 13131 / VPI 4355).